Consider the following 642-residue polypeptide: Medium-chain-fatty-acid--[acyl-carrier-protein] ligase TtuA (642 aa).

This sequence belongs to the ATP-dependent AMP-binding enzyme family.

It catalyses the reaction a medium-chain fatty acid + holo-[ACP] + ATP = a medium-chain fatty acyl-[ACP] + AMP + diphosphate. It carries out the reaction a medium-chain fatty acid + ATP + H(+) = a medium-chain fatty acyl-AMP + diphosphate. The catalysed reaction is a medium-chain fatty acyl-AMP + holo-[ACP] = a medium-chain fatty acyl-[ACP] + AMP + H(+). The enzyme catalyses decanoate + holo-[ACP] + ATP = decanoyl-[ACP] + AMP + diphosphate. It catalyses the reaction decanoate + ATP + H(+) = decanoyl-AMP + diphosphate. It carries out the reaction decanoyl-AMP + holo-[ACP] = decanoyl-[ACP] + AMP + H(+). Its function is as follows. Ligase likely involved in the biosynthesis of a polyyne metabolite. Catalyzes the activation of decanoic acid, followed by the loading of the activated decanoic acid onto the acyl carrier protein TtuC. Decanoic acid is the preferred substrate, but it can also use 10-undecenoic acid and lauric acid. Nonanoic acid and 7-octenoic acid are only weakly activated. This is Medium-chain-fatty-acid--[acyl-carrier-protein] ligase TtuA from Teredinibacter turnerae (strain ATCC 39867 / T7901).